The following is a 165-amino-acid chain: Nucleotide-binding protein P9211_04811 (165 aa).

This sequence belongs to the YajQ family.

Functionally, nucleotide-binding protein. This Prochlorococcus marinus (strain MIT 9211) protein is Nucleotide-binding protein P9211_04811.